Here is a 248-residue protein sequence, read N- to C-terminus: Triosephosphate isomerase (248 aa).

Positions 10 and 12 each coordinate substrate. His95 serves as the catalytic Electrophile. The active-site Proton acceptor is the Glu165.

It belongs to the triosephosphate isomerase family. Homodimer.

The catalysed reaction is D-glyceraldehyde 3-phosphate = dihydroxyacetone phosphate. The protein operates within carbohydrate biosynthesis; gluconeogenesis. It participates in carbohydrate degradation; glycolysis; D-glyceraldehyde 3-phosphate from glycerone phosphate: step 1/1. The protein is Triosephosphate isomerase (TPI1) of Debaryomyces hansenii (strain ATCC 36239 / CBS 767 / BCRC 21394 / JCM 1990 / NBRC 0083 / IGC 2968) (Yeast).